We begin with the raw amino-acid sequence, 171 residues long: PRA1-like protein (171 aa).

3 helical membrane passes run 67–87 (AIIA…LIVI), 119–139 (VILA…ETII), and 140–160 (WLVG…EPPV).

It belongs to the PRA1 family.

Its subcellular location is the membrane. In Schizosaccharomyces pombe (strain 972 / ATCC 24843) (Fission yeast), this protein is PRA1-like protein.